Here is a 518-residue protein sequence, read N- to C-terminus: MGALARALLLPLLAQWLLRAAPELAPAPFTLPLRVAAATNRVVAPTPGPGTPAERHADGLALALEPALASPAGAANFLAMVDNLQGDSGRGYYLEMLIGTPPQKLQILVDTGSSNFAVAGTPHSYIDTYFDTERSSTYRSKGFDVTVKYTQGSWTGFVGEDLVTIPKGFNTSFLVNIATIFESENFFLPGIKWNGILGLAYATLAKPSSSLETFFDSLVTQANIPNVFSMQMCGAGLPVAGSGTNGGSLVLGGIEPSLYKGDIWYTPIKEEWYYQIEILKLEIGGQSLNLDCREYNADKAIVDSGTTLLRLPQKVFDAVVEAVARASLIPEFSDGFWTGSQLACWTNSETPWSYFPKISIYLRDENSSRSFRITILPQLYIQPMMGAGLNYECYRFGISPSTNALVIGATVMEGFYVIFDRAQKRVGFAASPCAEIAGAAVSEISGPFSTEDVASNCVPAQSLSEPILWIVSYALMSVCGAILLVLIVLLLLPFRCQRRPRDPEVVNDESSLVRHRWK.

The N-terminal stretch at 1-20 is a signal peptide; the sequence is MGALARALLLPLLAQWLLRA. The propeptide occupies 21 to 62; that stretch reads APELAPAPFTLPLRVAAATNRVVAPTPGPGTPAERHADGLAL. Residues 21–473 are Extracellular-facing; that stretch reads APELAPAPFT…SEPILWIVSY (453 aa). The region spanning 92-429 is the Peptidase A1 domain; sequence YYLEMLIGTP…DRAQKRVGFA (338 aa). Asp110 is a catalytic residue. Asn170 carries N-linked (GlcNAc...) asparagine glycosylation. 3 disulfide bridges follow: Cys233/Cys433, Cys292/Cys457, and Cys344/Cys393. Asp303 is a catalytic residue. The N-linked (GlcNAc...) asparagine glycan is linked to Asn366. A helical transmembrane segment spans residues 474-494; that stretch reads ALMSVCGAILLVLIVLLLLPF. Topologically, residues 495–518 are cytoplasmic; that stretch reads RCQRRPRDPEVVNDESSLVRHRWK.

The protein belongs to the peptidase A1 family. Monomer. Interacts with RTN3 and RTN4. Post-translationally, undergoes autoproteolytic cleavage. Glycosylated. In terms of tissue distribution, brain. Present in neurons within the hippocampus, frontal cortex and temporal cortex (at protein level). Expressed at low levels in most peripheral tissues and at higher levels in colon, kidney, pancreas, placenta, prostate, stomach and trachea. Expressed at low levels in the brain. Found in spinal cord, medulla oblongata, substantia nigra and locus coruleus. Expressed in the ductal epithelium of both normal and malignant prostate.

It localises to the cell membrane. It is found in the golgi apparatus. The protein localises to the endoplasmic reticulum. The protein resides in the endosome. Its subcellular location is the melanosome. The enzyme catalyses Broad endopeptidase specificity. Cleaves Glu-Val-Asn-Leu-|-Asp-Ala-Glu-Phe in the Swedish variant of Alzheimer's amyloid precursor protein.. In terms of biological role, responsible for the proteolytic processing of the amyloid precursor protein (APP). Cleaves APP, between residues 690 and 691, leading to the generation and extracellular release of beta-cleaved soluble APP, and a corresponding cell-associated C-terminal fragment which is later released by gamma-secretase. It has also been shown that it can cleave APP between residues 671 and 672. Involved in the proteolytic shedding of PMEL at early stages of melanosome biogenesis. Cleaves PMEL within the M-beta fragment to release the amyloidogenic PMEL luminal fragment containing M-alpha and a small portion of M-beta N-terminus. This is a prerequisite step for subsequent processing and assembly of PMEL fibrils into amyloid sheets. Responsible also for the proteolytic processing of CLTRN in pancreatic beta cells. This chain is Beta-secretase 2 (BACE2), found in Homo sapiens (Human).